We begin with the raw amino-acid sequence, 72 residues long: Translation initiation factor IF-1 (72 aa).

The S1-like domain maps to methionine 1–lysine 72.

The protein belongs to the IF-1 family. In terms of assembly, component of the 30S ribosomal translation pre-initiation complex which assembles on the 30S ribosome in the order IF-2 and IF-3, IF-1 and N-formylmethionyl-tRNA(fMet); mRNA recruitment can occur at any time during PIC assembly.

The protein localises to the cytoplasm. Its function is as follows. One of the essential components for the initiation of protein synthesis. Stabilizes the binding of IF-2 and IF-3 on the 30S subunit to which N-formylmethionyl-tRNA(fMet) subsequently binds. Helps modulate mRNA selection, yielding the 30S pre-initiation complex (PIC). Upon addition of the 50S ribosomal subunit IF-1, IF-2 and IF-3 are released leaving the mature 70S translation initiation complex. This is Translation initiation factor IF-1 from Streptococcus gordonii (strain Challis / ATCC 35105 / BCRC 15272 / CH1 / DL1 / V288).